Here is a 280-residue protein sequence, read N- to C-terminus: Dermonecrotic toxin LgSicTox-alphaIC1 (280 aa).

Residue histidine 12 is part of the active site. The Mg(2+) site is built by glutamate 32 and aspartate 34. The Nucleophile role is filled by histidine 48. 2 disulfide bridges follow: cysteine 52/cysteine 58 and cysteine 54/cysteine 197. Aspartate 92 contributes to the Mg(2+) binding site.

It belongs to the arthropod phospholipase D family. Class II subfamily. Requires Mg(2+) as cofactor. In terms of tissue distribution, expressed by the venom gland.

The protein localises to the secreted. It catalyses the reaction an N-(acyl)-sphingosylphosphocholine = an N-(acyl)-sphingosyl-1,3-cyclic phosphate + choline. It carries out the reaction an N-(acyl)-sphingosylphosphoethanolamine = an N-(acyl)-sphingosyl-1,3-cyclic phosphate + ethanolamine. The catalysed reaction is a 1-acyl-sn-glycero-3-phosphocholine = a 1-acyl-sn-glycero-2,3-cyclic phosphate + choline. The enzyme catalyses a 1-acyl-sn-glycero-3-phosphoethanolamine = a 1-acyl-sn-glycero-2,3-cyclic phosphate + ethanolamine. Functionally, dermonecrotic toxins cleave the phosphodiester linkage between the phosphate and headgroup of certain phospholipids (sphingolipid and lysolipid substrates), forming an alcohol (often choline) and a cyclic phosphate. This toxin acts on sphingomyelin (SM) with high activity. It may also act on ceramide phosphoethanolamine (CPE), lysophosphatidylcholine (LPC) and lysophosphatidylethanolamine (LPE), but not on lysophosphatidylserine (LPS), and lysophosphatidylglycerol (LPG). It acts by transphosphatidylation, releasing exclusively cyclic phosphate products as second products. Induces platelet aggregation in platelet rich plasma, but not in washed platelet, indicating that this activity is dependent on plasma components. Also induces hemolysis. In vivo, the recombinant protein evokes an intense inflammatory reaction and dermonecrosis, similar to those induced by L.gaucho total venom. Is a good immunogen, capable of inducing immunoprotection in test animals. In terms of biological role, anionic antimicrobial peptide that shows antimicrobial activity against Gram-negative bacteria (MIC=1.15-4.6 uM) (tested on E.coli, P.aeruginosa, and E.cloacae), but not on Gram-negative bacteria (M.luteus, S.aureus, and B.subtilis), neither on fungi and yeasts (A.niger, C.albicans and C.krusei). Does not show hemolytic effects against human erythrocytes, and has no cytotoxic effects against human cervical carcinoma cells (HeLa). The polypeptide is Dermonecrotic toxin LgSicTox-alphaIC1 (Loxosceles gaucho (Spider)).